Here is a 143-residue protein sequence, read N- to C-terminus: Histone H2B.2, sperm (143 aa).

Positions 1–52 (MPRSPSKSSPRKGSPRKGSPRKGSPKRGGKGAKRAGKGGRRRNVVKRRRRRR) are disordered. Short sequence motifs (SPKK motif) lie at residues 4–7 (SPSK), 9–12 (SPRK), 14–17 (SPRK), 19–22 (SPRK), and 24–27 (SPKR). A compositionally biased stretch (basic residues) spans 9–52 (SPRKGSPRKGSPRKGSPKRGGKGAKRAGKGGRRRNVVKRRRRRR). 3 positions are modified to phosphoserine: S14, S19, and S24. S130 carries an O-linked (GlcNAc) serine glycan. A Glycyl lysine isopeptide (Lys-Gly) (interchain with G-Cter in ubiquitin) cross-link involves residue K138.

This sequence belongs to the histone H2B family. As to quaternary structure, the nucleosome is a histone octamer containing two molecules each of H2A, H2B, H3 and H4 assembled in one H3-H4 heterotetramer and two H2A-H2B heterodimers. The octamer wraps approximately 147 bp of DNA. Monoubiquitination of Lys-138 gives a specific tag for epigenetic transcriptional activation and is also prerequisite for histone H3 'Lys-4' and 'Lys-79' methylation. Post-translationally, phosphorylated on SPKK motifs 3, 4 and 5; which may regulate DNA binding. Dephosphorylated during maturation of spermatids to mature sperm and rephosphorylated at fertilization. In terms of processing, glcNAcylation at Ser-130 promotes monoubiquitination of Lys-138. It fluctuates in response to extracellular glucose, and associates with transcribed genes. As to expression, testis-specific.

It is found in the nucleus. The protein resides in the chromosome. Functionally, core component of nucleosome. Nucleosomes wrap and compact DNA into chromatin, limiting DNA accessibility to the cellular machineries which require DNA as a template. Histones thereby play a central role in transcription regulation, DNA repair, DNA replication and chromosomal stability. DNA accessibility is regulated via a complex set of post-translational modifications of histones, also called histone code, and nucleosome remodeling. This Lytechinus pictus (Painted sea urchin) protein is Histone H2B.2, sperm.